Here is a 162-residue protein sequence, read N- to C-terminus: NADH-quinone oxidoreductase subunit C (162 aa).

It belongs to the complex I 30 kDa subunit family. In terms of assembly, NDH-1 is composed of 14 different subunits. Subunits NuoB, C, D, E, F, and G constitute the peripheral sector of the complex.

The protein localises to the cell inner membrane. It catalyses the reaction a quinone + NADH + 5 H(+)(in) = a quinol + NAD(+) + 4 H(+)(out). NDH-1 shuttles electrons from NADH, via FMN and iron-sulfur (Fe-S) centers, to quinones in the respiratory chain. The immediate electron acceptor for the enzyme in this species is believed to be ubiquinone. Couples the redox reaction to proton translocation (for every two electrons transferred, four hydrogen ions are translocated across the cytoplasmic membrane), and thus conserves the redox energy in a proton gradient. The protein is NADH-quinone oxidoreductase subunit C of Trichlorobacter lovleyi (strain ATCC BAA-1151 / DSM 17278 / SZ) (Geobacter lovleyi).